The following is a 938-amino-acid chain: MILGPGGRIFINHGHPAYPHLMDFLTACCEPVCRTLYVSEYTISPSSLSAATAEGTYSMEMVRNVIRYFRLDEQQQIPVDVERYAALERRVRDSVQDTSLDLPMEVGEAKVSANGDVKAEEGCEEATDELSPLAGQVKKEETKEVAAEPRRRFLSLSKRISAKSEPLVTRAVVNTGALQPLPADLEQMLREEENSSRVRIVLQPCLRPVKRRAVGGDKQHSDEQQCQRAEETKLAYFLTSPDRNHMEHLVSRLQDFLVPVLLHGTRRWVVSDVDRGVEERSTAESGRAKTLRRLFEAPSSASGRSVASKSLTNEGANGDGLGGGVGRRCTRIVYKSQVMDGKMRNVRERLYKELSVRADLFYDYVQDHSLHVCDLELSENVRLRPYQVASLERFRSGNKAHQGVIVLPCGAGKTLTGIGAAATVKKRTIVMCINVMSVLQWQREFIRWTNLSEDQVTVCIADKKQMPGDVFITTYSMLIARRSNVPEMEQSADAKLTAKILASVGEQPWGLLLLDEVHTALAHNFQEVLNKVKYKCVIGLSATLLREDDKIGDLRHLVGPKLYEANWLDLTRAGFLARVECAEIQCPLPKAFLTEYLESQSDGDPFARRGTTRMAHSVVCLNPYKLWCTQALLEFHRNRSPPDKVIIFCDQIDGIQYYAQHLHVPFMDGKTSDMERENLLQYFQHSDNINAIILSRVGDVALDIPCASVVIQISGLGASRRQEAQRLGRILRPKPASLDNVCSYFYTLVSQDTHEISQSYERQSWLRDQGFSYRVLQSDMVLQHFLRTGGKLCCVGPPRWWYECAGPSCDSAVAAKGTYWIPFSQEAALRMQSRFVAGVRGCDLTATVLRDTPRPPELKNMGVEEKWTVCFSDSCAPETFGTVQLVEGNPLLVRRICCGPLAVEHDCLHGGEECLQYAVQQMKVMVAKNSKNRIPLTT.

The region spanning 394 to 562 (FRSGNKAHQG…DLRHLVGPKL (169 aa)) is the Helicase ATP-binding domain. ATP is bound at residue 407 to 414 (LPCGAGKT). The DEVH box signature appears at 515-518 (DEVH). The region spanning 627–781 (WCTQALLEFH…SYRVLQSDMV (155 aa)) is the Helicase C-terminal domain.

Belongs to the helicase family. RAD25/XPB subfamily. Component of the 7-subunit TFIIH core complex composed of XPB, XPD, SSL1, TFB1, TFB2, TFB4 and TFB5.

The catalysed reaction is Couples ATP hydrolysis with the unwinding of duplex DNA by translocating in the 3'-5' direction.. It carries out the reaction ATP + H2O = ADP + phosphate + H(+). In terms of biological role, ATP-dependent 3'-5' DNA helicase/translocase; binds dsDNA rather than ssDNA, unzipping it in a translocase rather than classical helicase activity. Component of the general transcription factor IIH (TFIIH) core complex, involved in spliced leader RNA (SL RNA) gene transcription by RNA polymerase II. TFIIH has an essential role in transcription initiation. When the pre-initiation complex (PIC) has been established, TFIIH is required for promoter opening and promoter escape. The ATPase activity of XPB is required for promoter opening and promoter escape. In Trypanosoma brucei brucei (strain 927/4 GUTat10.1), this protein is TFIIH basal transcription factor complex helicase/translocase XPB subunit.